A 666-amino-acid polypeptide reads, in one-letter code: Long chain acyl-CoA synthetase 5 (666 aa).

228–239 (IMYTSGTTGDPK) lines the ATP pocket. The fatty acid-binding stretch occupies residues 495–519 (DGWLHTGDVGEWQPNGSMKIIDRKK).

It belongs to the ATP-dependent AMP-binding enzyme family. Mg(2+) serves as cofactor.

It carries out the reaction a long-chain fatty acid + ATP + CoA = a long-chain fatty acyl-CoA + AMP + diphosphate. It functions in the pathway lipid metabolism; fatty acid metabolism. Activation of long-chain fatty acids for both synthesis of cellular lipids, and degradation via beta-oxidation. Preferentially uses palmitate, palmitoleate, oleate and linoleate. The polypeptide is Long chain acyl-CoA synthetase 5 (LACS5) (Arabidopsis thaliana (Mouse-ear cress)).